Reading from the N-terminus, the 361-residue chain is 3-dehydroquinate synthase (361 aa).

Residues 69–74, 103–107, 127–128, K140, K149, and 167–170 contribute to the NAD(+) site; these read DGEEYK, GVIGD, TT, and TLDT. E182, H245, and H262 together coordinate Zn(2+).

The protein belongs to the sugar phosphate cyclases superfamily. Dehydroquinate synthase family. Co(2+) serves as cofactor. The cofactor is Zn(2+). It depends on NAD(+) as a cofactor.

It localises to the cytoplasm. The catalysed reaction is 7-phospho-2-dehydro-3-deoxy-D-arabino-heptonate = 3-dehydroquinate + phosphate. Its pathway is metabolic intermediate biosynthesis; chorismate biosynthesis; chorismate from D-erythrose 4-phosphate and phosphoenolpyruvate: step 2/7. Its function is as follows. Catalyzes the conversion of 3-deoxy-D-arabino-heptulosonate 7-phosphate (DAHP) to dehydroquinate (DHQ). The chain is 3-dehydroquinate synthase from Thioalkalivibrio sulfidiphilus (strain HL-EbGR7).